Here is a 470-residue protein sequence, read N- to C-terminus: Cannabinoid receptor type 1B (470 aa).

The Extracellular segment spans residues 1 to 113 (MKLALHRIAG…CFMILTPAQQ (113 aa)). N-linked (GlcNAc...) asparagine glycosylation is found at asparagine 78 and asparagine 86. Residues 114–139 (LVIVILAITLGTFTVLENFVVLCVIL) traverse the membrane as a helical segment. The Cytoplasmic portion of the chain corresponds to 140 to 151 (HSHTLRSRPSYH). The helical transmembrane segment at 152–172 (FIGSLAVADLIGSIIFVYSFL) threads the bilayer. At 173-184 (DFHVLHRKDSPS) the chain is on the extracellular side. A helical transmembrane segment spans residues 185 to 209 (IFLFKLAGVIASFTASVGSLFLTAI). The Cytoplasmic portion of the chain corresponds to 210 to 229 (DRYVSIHRPMAYKRIITKTK). The chain crosses the membrane as a helical span at residues 230–252 (AVIAFSVMWAISIEFSLLPLLGW). At 253 to 270 (NCKRLHSVCSDIFPLIDE) the chain is on the extracellular side. The chain crosses the membrane as a helical span at residues 271-296 (KYLMFWIGMTTVLLLFIIYAYMFILW). Over 297-341 (KSHHHAVRMLSRSSQRSIIVYTSEGTKVQTVRPEQARMDLRLAKT) the chain is Cytoplasmic. The chain crosses the membrane as a helical span at residues 342–362 (LVLILVALIICWGPLLAIMVY). Residues 363-374 (DLFGRVNDFIKT) are Extracellular-facing. The chain crosses the membrane as a helical span at residues 375-396 (VFAFCSMLCLLNSTINPVIYAM). The Cytoplasmic segment spans residues 397–470 (RSKDLRRAFV…VTASSPAEAV (74 aa)). Cysteine 412 carries S-palmitoyl cysteine lipidation. Polar residues predominate over residues 418 to 434 (SLDSSAESDWNSRSVRS). Residues 418 to 450 (SLDSSAESDWNSRSVRSTGGRAGKDRSVGGKPQ) are disordered.

This sequence belongs to the G-protein coupled receptor 1 family. In terms of processing, palmitoylation at Cys-412 is important for recruitment at both plasma membrane and lipid rafts and association with G protein alpha subunits.

The protein resides in the cell membrane. The protein localises to the mitochondrion outer membrane. Its subcellular location is the cell projection. It is found in the axon. It localises to the presynapse. Functionally, G-protein coupled receptor for cannabinoids. Mediates many cannabinoid-induced effects in the central nervous system (CNS), as well as in peripheral tissues. Regulates cellular respiration and energy production in response to cannabinoids. Signaling typically involves reduction in cyclic AMP. This is Cannabinoid receptor type 1B (cnr1b) from Takifugu rubripes (Japanese pufferfish).